The following is a 526-amino-acid chain: Dual specificity tyrosine-phosphorylation-regulated kinase 2 (526 aa).

2 stretches are compositionally biased toward polar residues: residues 30-40 and 60-70; these read TTQPNGLTTLG and GSSSSLKSTDG. Residues 30–76 are disordered; that stretch reads TTQPNGLTTLGKSGLPVVQDRQSESAHRRQGSSSSLKSTDGTGKVKA. Phosphothreonine; by ATM is present on T31. Residues 114 to 116 carry the Nuclear localization signal motif; it reads KKR. The Protein kinase domain occupies 147 to 460; that stretch reads YEVLKVIGKG…PSQALRHPWL (314 aa). ATP contacts are provided by residues 153 to 161, K176, and 226 to 229; these read IGKGSFGQV and FELL. The Proton acceptor role is filled by D273. Residue Y307 is modified to Phosphotyrosine. S367 bears the Phosphoserine; by ATM mark. The tract at residues 462 to 499 is disordered; sequence RRLPKPPTGEKASAKRITESTGAITSISKLPPTSSSAS. A compositionally biased stretch (polar residues) spans 480–499; it reads ESTGAITSISKLPPTSSSAS.

The protein belongs to the protein kinase superfamily. CMGC Ser/Thr protein kinase family. MNB/DYRK subfamily. In terms of assembly, interacts with MDM2. Mg(2+) is required as a cofactor. Mn(2+) serves as cofactor. Post-translationally, phosphorylated on serine/threonine residues. Phosphorylation on Thr-31 and Ser-367 by ATM in response to genotoxic stress disrupts MDM2 binding and prevents MDM2-mediated ubiquitination and subsequent proteasome degradation, thus promoting p53/TP53-mediated apoptosis. In terms of processing, ubiquitination in nucleus by MDM2 in normal conditions leads to proteasome degradation.

It localises to the cytoplasm. Its subcellular location is the nucleus. The catalysed reaction is L-seryl-[protein] + ATP = O-phospho-L-seryl-[protein] + ADP + H(+). The enzyme catalyses L-threonyl-[protein] + ATP = O-phospho-L-threonyl-[protein] + ADP + H(+). It carries out the reaction L-tyrosyl-[protein] + ATP = O-phospho-L-tyrosyl-[protein] + ADP + H(+). Autophosphorylates on tyrosine residues. In terms of biological role, serine/threonine-protein kinase involved in the control of mitotic transition and the regulation of cellular growth and/or development. The polypeptide is Dual specificity tyrosine-phosphorylation-regulated kinase 2 (Gallus gallus (Chicken)).